Consider the following 149-residue polypeptide: Endoribonuclease YbeY (149 aa).

Zn(2+) contacts are provided by H113, H117, and H123.

It belongs to the endoribonuclease YbeY family. Requires Zn(2+) as cofactor.

The protein resides in the cytoplasm. Single strand-specific metallo-endoribonuclease involved in late-stage 70S ribosome quality control and in maturation of the 3' terminus of the 16S rRNA. The chain is Endoribonuclease YbeY from Saccharophagus degradans (strain 2-40 / ATCC 43961 / DSM 17024).